The primary structure comprises 275 residues: UPF0758 protein RL2068 (275 aa).

Residues 1 to 45 form a disordered region; sequence MAKGPVSTSSDDELPFETQEPIAADERSFFGGQPQKPSAPNARAA. Positions 153–275 constitute an MPN domain; the sequence is VLSSWSSVIQ…HVSLKGLKLI (123 aa). Residues H224, H226, and D237 each contribute to the Zn(2+) site. The JAMM motif signature appears at 224 to 237; that stretch reads HNHPSGDPTPSRAD.

This sequence belongs to the UPF0758 family.

In Rhizobium johnstonii (strain DSM 114642 / LMG 32736 / 3841) (Rhizobium leguminosarum bv. viciae), this protein is UPF0758 protein RL2068.